The sequence spans 362 residues: S-adenosylmethionine:tRNA ribosyltransferase-isomerase (362 aa).

Belongs to the QueA family. Monomer.

Its subcellular location is the cytoplasm. The catalysed reaction is 7-aminomethyl-7-carbaguanosine(34) in tRNA + S-adenosyl-L-methionine = epoxyqueuosine(34) in tRNA + adenine + L-methionine + 2 H(+). It participates in tRNA modification; tRNA-queuosine biosynthesis. Transfers and isomerizes the ribose moiety from AdoMet to the 7-aminomethyl group of 7-deazaguanine (preQ1-tRNA) to give epoxyqueuosine (oQ-tRNA). This chain is S-adenosylmethionine:tRNA ribosyltransferase-isomerase, found in Deinococcus radiodurans (strain ATCC 13939 / DSM 20539 / JCM 16871 / CCUG 27074 / LMG 4051 / NBRC 15346 / NCIMB 9279 / VKM B-1422 / R1).